A 294-amino-acid polypeptide reads, in one-letter code: Ribosomal RNA small subunit methyltransferase H (294 aa).

S-adenosyl-L-methionine contacts are provided by residues 36–38 (GGH), Asp55, Phe82, Asp97, and Gln104.

The protein belongs to the methyltransferase superfamily. RsmH family.

It localises to the cytoplasm. It carries out the reaction cytidine(1402) in 16S rRNA + S-adenosyl-L-methionine = N(4)-methylcytidine(1402) in 16S rRNA + S-adenosyl-L-homocysteine + H(+). Its function is as follows. Specifically methylates the N4 position of cytidine in position 1402 (C1402) of 16S rRNA. This is Ribosomal RNA small subunit methyltransferase H from Synechococcus sp. (strain CC9605).